Here is a 467-residue protein sequence, read N- to C-terminus: Iroquois-class homeodomain protein irx-1 (467 aa).

A DNA-binding region (homeobox; TALE-type) is located at residues 126–188 (DPGRPKNATR…NARRRLKKEN (63 aa)). Disordered regions lie at residues 198–307 (EDDN…PHNK), 319–342 (SPDGALKSSPPPSQANHTSPPIQH), and 410–467 (SLSS…LPSA). Composition is skewed to acidic residues over residues 215–225 (EDDEEIDLESI) and 233–244 (NDGEQSNEEEDE). The segment covering 245-262 (KLEHLRQGEKESFKKESE) has biased composition (basic and acidic residues). Over residues 415–431 (KTPERTSPKHSDRENLP) the composition is skewed to basic and acidic residues. The segment covering 447-460 (RENTLSQQEGTSRI) has biased composition (polar residues).

Belongs to the TALE/IRO homeobox family. Expressed in the neural plate in overlapping patterns with other irx members, which all share an anterior border of expression. Also expressed in the mesoderm, placodes and notochord. Broadly expressed in the tailbud rhombencephalon (hindbrain). Outside the nervous system and at tailbud stages, expressed in the developing otic vesicle, branchial arches, prospective heart region and pronephros.

It localises to the nucleus. In terms of biological role, acts partially redundantly with other irx members in neural patterning. Required for formation of the posterior forebrain, midbrain, hindbrain, and to a lesser extent, spinal cord. Acts early in neural plate development to induce expression of some but not all proneural genes, and specify a neural precursor state. Also up-regulates repressors that prevent neuronal differentiation. Patterns the neuroectoderm in both the anterior/posterior and dorsal/ventral axes. Acts primarily as a transcriptional repressor during neural development, and binds to the bmp4 promoter to repress gene expression and thus mediate down-regulation of bmp4 by wnt signaling. Controls multiple processes through bmp4-repression including neural plate development, neural crest specification and Spemann organizer development. Involved in the specification of the preplacodal field at the anterior border of the neural plate. Regulates the genetic cascade of interactions that are necessary for positioning the isthmus organizer and the formation of the midbrain-hindbrain boundary. Required during at least two stages of pronephros kidney development; during neurula stages, maintains transcription of key renal genes to define the size and identity of the pronephric anlage, probably in part through regulation of bmp-signaling. Subsequently required for proper formation of the intermediate tubule segment of the pronephros. Acts principally as a transcriptional activator during pronephros development. This chain is Iroquois-class homeodomain protein irx-1, found in Xenopus tropicalis (Western clawed frog).